The following is a 572-amino-acid chain: MALTIPRSQYVATYGPTVGDKVRLGDTDLWATIEQDFLTKGDECKFGGGKSVRDGMAQSSTATRDNPNVLDFALTNVMIIDAKLGIIKADIGIRDGRIVGIGQAGNPDTMDNVTPNMIIGASTEVHNGAHLIATAGGIDTHIHWICPQQAQHAIENGITTMIGGGSGPADGTHATTCTPGKFNIERMFQACEALPVNIGFFGKGNCSMLEPLKEQVVAGALGLKIHEDWGATPAVIDAALKVADEMDVQVAIHTDTLNESGFLEDTMKAINGRVIHTFHTEGAGGGHAPDIIKAAMYPNVLPASTNPTRPFTVNTIDEHLDMLMVCHHLDKRVPEDVAFADSRIRPETIAAEDILHDMGVFSIMSSDSQAMGRVGEVVTRTWQTADKMKAQRGALGDEGNDNFRIKRYIAKYTINPAIAHGISQYVGSLEVGKLADIVLWKPQFFGVKPEFVMKKGFISFAKMGDPNASIPTPQPVFYRPMFGANAKANTESAVYFVSQASVDANIKAQYGIQKETLAVKGCRDVGKKDLVHNNATPEITVDPERYEVRVDGEHITCEPATKVPLAQRYFLF.

The Urease domain occupies 136 to 572; the sequence is GGIDTHIHWI…VPLAQRYFLF (437 aa). Ni(2+) is bound by residues H141, H143, and K224. N6-carboxylysine is present on K224. Residue H226 participates in substrate binding. 2 residues coordinate Ni(2+): H253 and H279. The active-site Proton donor is H327. Ni(2+) is bound at residue D367.

Belongs to the metallo-dependent hydrolases superfamily. Urease alpha subunit family. As to quaternary structure, heterotrimer of UreA (gamma), UreB (beta) and UreC (alpha) subunits. Three heterotrimers associate to form the active enzyme. The cofactor is Ni cation. Carboxylation allows a single lysine to coordinate two nickel ions.

It localises to the cytoplasm. It catalyses the reaction urea + 2 H2O + H(+) = hydrogencarbonate + 2 NH4(+). Its pathway is nitrogen metabolism; urea degradation; CO(2) and NH(3) from urea (urease route): step 1/1. The polypeptide is Urease subunit alpha (Actinobacillus pleuropneumoniae serotype 7 (strain AP76)).